The sequence spans 369 residues: Flagellar P-ring protein (369 aa).

The N-terminal stretch at 1–22 (MFNVRQLIATTLLLSCAFAAQA) is a signal peptide.

It belongs to the FlgI family. As to quaternary structure, the basal body constitutes a major portion of the flagellar organelle and consists of four rings (L,P,S, and M) mounted on a central rod.

It is found in the periplasm. The protein localises to the bacterial flagellum basal body. Functionally, assembles around the rod to form the L-ring and probably protects the motor/basal body from shearing forces during rotation. The sequence is that of Flagellar P-ring protein from Pseudomonas putida (strain ATCC 47054 / DSM 6125 / CFBP 8728 / NCIMB 11950 / KT2440).